The chain runs to 715 residues: Interferon-induced GTP-binding protein Mx2 (715 aa).

The segment covering 1–14 (MSKAHKSWPHRRRN) has biased composition (basic residues). 2 disordered regions span residues 1–24 (MSKA…SLKK) and 69–88 (NNQP…PENN). Polar residues predominate over residues 69 to 80 (NNQPLPGNTSQP). The 273-residue stretch at 115-387 (DLALPAIAVI…LITHIQKSLP (273 aa)) folds into the Dynamin-type G domain. Residues 125 to 132 (GDQSSGKS) are G1 motif. A GTP-binding site is contributed by 125-132 (GDQSSGKS). Residues 150–152 (VTR) form a G2 motif region. The segment at 225–228 (DLPG) is G3 motif. GTP is bound by residues 225 to 229 (DLPGI) and 294 to 297 (TKPD). Residues 294-297 (TKPD) are G4 motif. The segment at 326–329 (KCRG) is G5 motif. Positions 623–714 (FNEIGVHLNA…ALCQFSSKEI (92 aa)) constitute a GED domain.

It belongs to the TRAFAC class dynamin-like GTPase superfamily. Dynamin/Fzo/YdjA family.

The protein resides in the cytoplasm. It is found in the nucleus. In terms of biological role, interferon-induced dynamin-like GTPase with antiviral activity. The protein is Interferon-induced GTP-binding protein Mx2 (MX2) of Macaca mulatta (Rhesus macaque).